Reading from the N-terminus, the 354-residue chain is 3-isopropylmalate dehydrogenase (354 aa).

Gly-76 to Glu-87 contributes to the NAD(+) binding site. Residues Arg-94, Arg-104, Arg-130, and Asp-215 each coordinate substrate. Mg(2+) is bound by residues Asp-215, Asp-239, and Asp-243. Residue Gly-273 to Asn-285 participates in NAD(+) binding.

The protein belongs to the isocitrate and isopropylmalate dehydrogenases family. LeuB type 1 subfamily. Homodimer. It depends on Mg(2+) as a cofactor. Mn(2+) serves as cofactor.

It is found in the cytoplasm. It carries out the reaction (2R,3S)-3-isopropylmalate + NAD(+) = 4-methyl-2-oxopentanoate + CO2 + NADH. Its pathway is amino-acid biosynthesis; L-leucine biosynthesis; L-leucine from 3-methyl-2-oxobutanoate: step 3/4. In terms of biological role, catalyzes the oxidation of 3-carboxy-2-hydroxy-4-methylpentanoate (3-isopropylmalate) to 3-carboxy-4-methyl-2-oxopentanoate. The product decarboxylates to 4-methyl-2 oxopentanoate. The chain is 3-isopropylmalate dehydrogenase from Bacillus anthracis.